The primary structure comprises 388 residues: Cell adhesion molecule 4 (388 aa).

The first 20 residues, 1–20, serve as a signal peptide directing secretion; sequence MGRARRFQWPLLLLWAAAAG. Residues 21–119 form the Ig-like V-type domain; sequence PGTAQEVQTE…DTHHQIATLT (99 aa). Residues 25-324 are Extracellular-facing; the sequence is QEVQTENVTV…VEAQTSVPYA (300 aa). N-linked (GlcNAc...) asparagine glycans are attached at residues Asn31 and Asn67. Intrachain disulfides connect Cys44-Cys104, Cys145-Cys199, and Cys245-Cys291. 2 consecutive Ig-like C2-type domains span residues 124–219 and 224–307; these read PENP…YVLD and PTAR…YVLV. An N-linked (GlcNAc...) asparagine glycan is attached at Asn286. Residues 325-345 form a helical membrane-spanning segment; it reads IVGGILALLVFLIICVLVGMV. Topologically, residues 346–388 are cytoplasmic; sequence WCSVRQKGSYLTHEASGLDEQGEAREAFLNGSDGHKRKEEFFI. A Phosphoserine modification is found at Ser361.

This sequence belongs to the nectin family. In terms of assembly, monomer and homodimer. N-glycosylated.

It localises to the membrane. In terms of biological role, involved in the cell-cell adhesion. Has calcium- and magnesium-independent cell-cell adhesion activity. May have tumor-suppressor activity. In Rattus norvegicus (Rat), this protein is Cell adhesion molecule 4 (Cadm4).